We begin with the raw amino-acid sequence, 215 residues long: Probable phosphoglycerate mutase GpmB (215 aa).

Residues 8–15 (RHGETQWN), 21–22 (QG), Arg-58, 82–85 (ELDM), 104–105 (RR), and 151–152 (GI) contribute to the substrate site. His-9 acts as the Tele-phosphohistidine intermediate in catalysis. The active-site Proton donor/acceptor is Glu-82.

The protein belongs to the phosphoglycerate mutase family. GpmB subfamily.

The catalysed reaction is (2R)-2-phosphoglycerate = (2R)-3-phosphoglycerate. It functions in the pathway carbohydrate degradation; glycolysis; pyruvate from D-glyceraldehyde 3-phosphate: step 3/5. The sequence is that of Probable phosphoglycerate mutase GpmB from Enterobacter sp. (strain 638).